The primary structure comprises 280 residues: 4-hydroxy-tetrahydrodipicolinate reductase (280 aa).

NAD(+) is bound by residues 14–19 (GAAGRM), aspartate 40, 106–108 (ATT), and 130–133 (APSM). Histidine 166 (proton donor/acceptor) is an active-site residue. Histidine 167 is a binding site for (S)-2,3,4,5-tetrahydrodipicolinate. Lysine 170 acts as the Proton donor in catalysis. 176–177 (GT) is a binding site for (S)-2,3,4,5-tetrahydrodipicolinate.

This sequence belongs to the DapB family.

It is found in the cytoplasm. The catalysed reaction is (S)-2,3,4,5-tetrahydrodipicolinate + NAD(+) + H2O = (2S,4S)-4-hydroxy-2,3,4,5-tetrahydrodipicolinate + NADH + H(+). It carries out the reaction (S)-2,3,4,5-tetrahydrodipicolinate + NADP(+) + H2O = (2S,4S)-4-hydroxy-2,3,4,5-tetrahydrodipicolinate + NADPH + H(+). The protein operates within amino-acid biosynthesis; L-lysine biosynthesis via DAP pathway; (S)-tetrahydrodipicolinate from L-aspartate: step 4/4. In terms of biological role, catalyzes the conversion of 4-hydroxy-tetrahydrodipicolinate (HTPA) to tetrahydrodipicolinate. This chain is 4-hydroxy-tetrahydrodipicolinate reductase, found in Rhodopirellula baltica (strain DSM 10527 / NCIMB 13988 / SH1).